Here is a 473-residue protein sequence, read N- to C-terminus: Eukaryotic translation initiation factor 2 subunit gamma (473 aa).

One can recognise a tr-type G domain in the interval 40 to 250; sequence QATINIGTIG…AICNIAPPNY (211 aa). The tract at residues 49–56 is G1; the sequence is GHVAHGKS. 52-57 contacts GTP; it reads AHGKSS. Residues 77–81 form a G2 region; it reads NITIK. A G3 region spans residues 135-138; sequence DCPG. GTP contacts are provided by residues 193-196 and 228-230; these read NKMD and SAQ. The tract at residues 193-196 is G4; sequence NKMD. The G5 stretch occupies residues 228–230; sequence SAQ. The interval 458–470 is interacts with CDC123; it reads GKVRSGGTLCEVV.

The protein belongs to the TRAFAC class translation factor GTPase superfamily. Classic translation factor GTPase family. EIF2G subfamily. Eukaryotic translation initiation factor 2 eIF2 is a heterotrimeric complex composed of an alpha, a beta and a gamma subunit. The factors eIF-1, eIF-2, eIF-3, TIF5/eIF-5 and methionyl-tRNAi form a multifactor complex (MFC) that may bind to the 40S ribosome.

It is found in the cytoplasm. Its subcellular location is the cytosol. It catalyses the reaction GTP + H2O = GDP + phosphate + H(+). Functionally, as a subunit of eukaryotic initiation factor 2 eIF2, involved in the early steps of protein synthesis. In the presence of GTP, eIF-2 forms a ternary complex with initiator tRNA Met-tRNAi and then recruits the 40S ribosomal complex and initiation factors eIF-1, eIF-1A and eIF-3 to form the 43S pre-initiation complex (43S PIC), a step that determines the rate of protein translation. The 43S PIC binds to mRNA and scans downstream to the initiation codon, where it forms a 48S initiation complex by codon-anticodon base pairing. This leads to the displacement of eIF-1 to allow GTPase-activating protein (GAP) eIF-5-mediated hydrolysis of eIF2-bound GTP. Hydrolysis of GTP and release of Pi, which makes GTP hydrolysis irreversible, causes the release of the eIF-2-GDP binary complex from the 40S subunit, an event that is essential for the subsequent joining of the 60S ribosomal subunit to form an elongation-competent 80S ribosome. In order for eIF-2 to recycle and catalyze another round of initiation, the GDP bound to eIF-2 must be exchanged with GTP by way of a reaction catalyzed by GDP-GTP exchange factor (GEF) eIF-2B. This chain is Eukaryotic translation initiation factor 2 subunit gamma, found in Cryptococcus neoformans var. grubii serotype A (strain H99 / ATCC 208821 / CBS 10515 / FGSC 9487) (Filobasidiella neoformans var. grubii).